A 110-amino-acid chain; its full sequence is UPF0060 membrane protein SACE_5620 (110 aa).

4 consecutive transmembrane segments (helical) span residues 8-28, 34-54, 63-83, and 89-109; these read VVLF…VWQG, GLLW…VATF, ILAA…VVVD, and RWDL…MYAP.

The protein belongs to the UPF0060 family.

Its subcellular location is the cell membrane. This chain is UPF0060 membrane protein SACE_5620, found in Saccharopolyspora erythraea (strain ATCC 11635 / DSM 40517 / JCM 4748 / NBRC 13426 / NCIMB 8594 / NRRL 2338).